We begin with the raw amino-acid sequence, 644 residues long: CTP synthase (644 aa).

The Glutamine amidotransferase type-1 domain occupies 300–551 (SIAIVGKYTK…LGLILASVDR (252 aa)). Catalysis depends on for GATase activity residues Cys-399, His-527, and Glu-529.

It belongs to the CTP synthase family.

It carries out the reaction UTP + L-glutamine + ATP + H2O = CTP + L-glutamate + ADP + phosphate + 2 H(+). It participates in pyrimidine metabolism; CTP biosynthesis via de novo pathway; CTP from UDP: step 2/2. Its function is as follows. Catalyzes the ATP-dependent amination of UTP to CTP with either L-glutamine or ammonia as the source of nitrogen. Constitutes the rate-limiting enzyme in the synthesis of cytosine nucleotides. In Drosophila pseudoobscura pseudoobscura (Fruit fly), this protein is CTP synthase.